We begin with the raw amino-acid sequence, 360 residues long: Lipid-A-disaccharide synthase (360 aa).

It belongs to the LpxB family.

It carries out the reaction a lipid X + a UDP-2-N,3-O-bis[(3R)-3-hydroxyacyl]-alpha-D-glucosamine = a lipid A disaccharide + UDP + H(+). Its pathway is bacterial outer membrane biogenesis; LPS lipid A biosynthesis. Functionally, condensation of UDP-2,3-diacylglucosamine and 2,3-diacylglucosamine-1-phosphate to form lipid A disaccharide, a precursor of lipid A, a phosphorylated glycolipid that anchors the lipopolysaccharide to the outer membrane of the cell. This Helicobacter pylori (strain P12) protein is Lipid-A-disaccharide synthase.